We begin with the raw amino-acid sequence, 428 residues long: Histidine--tRNA ligase (428 aa).

Belongs to the class-II aminoacyl-tRNA synthetase family. Homodimer.

It is found in the cytoplasm. The catalysed reaction is tRNA(His) + L-histidine + ATP = L-histidyl-tRNA(His) + AMP + diphosphate + H(+). The sequence is that of Histidine--tRNA ligase from Lactobacillus johnsonii (strain CNCM I-12250 / La1 / NCC 533).